A 409-amino-acid polypeptide reads, in one-letter code: Arginine deiminase (409 aa).

Catalysis depends on C399, which acts as the Amidino-cysteine intermediate.

This sequence belongs to the arginine deiminase family.

It is found in the cytoplasm. The enzyme catalyses L-arginine + H2O = L-citrulline + NH4(+). Its pathway is amino-acid degradation; L-arginine degradation via ADI pathway; carbamoyl phosphate from L-arginine: step 1/2. The chain is Arginine deiminase from Streptococcus pneumoniae (strain 70585).